The following is a 208-amino-acid chain: Large ribosomal subunit protein bL9 (208 aa).

The interval 161–208 is disordered; sequence KKRKIEKEVEEGSGTSVDESLKLDSVSDSIDTSGVNSSDKEEENNIIE. Residues 186–197 are compositionally biased toward polar residues; that stretch reads VSDSIDTSGVNS.

Belongs to the bacterial ribosomal protein bL9 family.

Functionally, binds to the 23S rRNA. This Ehrlichia canis (strain Jake) protein is Large ribosomal subunit protein bL9.